Here is a 290-residue protein sequence, read N- to C-terminus: Signal recognition particle receptor subunit beta (290 aa).

A helical transmembrane segment spans residues 44-64 (VLLLALFTLIFIIIISKLFGS). GTP is bound by residues 92–100 (GLSNAGKTA), 114–117 (THTS), Gly-140, and Ala-268.

The protein belongs to the SRP receptor beta subunit family. In terms of assembly, heterodimer of an alpha and a beta chain.

Its subcellular location is the endoplasmic reticulum membrane. Component of the signal recognition particle (SRP) complex receptor (SR). Ensures, in conjunction with the SRP complex, the correct targeting of the nascent secretory proteins to the endoplasmic reticulum membrane system. May mediate the membrane association of SR. The chain is Signal recognition particle receptor subunit beta (srprb) from Dictyostelium discoideum (Social amoeba).